Reading from the N-terminus, the 376-residue chain is Succinyl-diaminopimelate desuccinylase (376 aa).

Histidine 66 is a binding site for Zn(2+). Residue aspartate 68 is part of the active site. Aspartate 99 is a Zn(2+) binding site. The active-site Proton acceptor is glutamate 133. Residues glutamate 134, glutamate 162, and histidine 348 each contribute to the Zn(2+) site.

It belongs to the peptidase M20A family. DapE subfamily. Homodimer. Zn(2+) is required as a cofactor. Co(2+) serves as cofactor.

It carries out the reaction N-succinyl-(2S,6S)-2,6-diaminopimelate + H2O = (2S,6S)-2,6-diaminopimelate + succinate. Its pathway is amino-acid biosynthesis; L-lysine biosynthesis via DAP pathway; LL-2,6-diaminopimelate from (S)-tetrahydrodipicolinate (succinylase route): step 3/3. Its function is as follows. Catalyzes the hydrolysis of N-succinyl-L,L-diaminopimelic acid (SDAP), forming succinate and LL-2,6-diaminopimelate (DAP), an intermediate involved in the bacterial biosynthesis of lysine and meso-diaminopimelic acid, an essential component of bacterial cell walls. This is Succinyl-diaminopimelate desuccinylase from Xanthomonas euvesicatoria pv. vesicatoria (strain 85-10) (Xanthomonas campestris pv. vesicatoria).